The following is a 448-amino-acid chain: Probable ribonuclease FAU-1 (448 aa).

It belongs to the FAU-1 family.

Probable RNase involved in rRNA stability through maturation and/or degradation of precursor rRNAs. Binds to RNA in loop regions with AU-rich sequences. This is Probable ribonuclease FAU-1 from Pyrobaculum calidifontis (strain DSM 21063 / JCM 11548 / VA1).